A 106-amino-acid polypeptide reads, in one-letter code: Large ribosomal subunit protein uL24 (106 aa).

It belongs to the universal ribosomal protein uL24 family. Part of the 50S ribosomal subunit.

Its function is as follows. One of two assembly initiator proteins, it binds directly to the 5'-end of the 23S rRNA, where it nucleates assembly of the 50S subunit. One of the proteins that surrounds the polypeptide exit tunnel on the outside of the subunit. The chain is Large ribosomal subunit protein uL24 from Acidovorax sp. (strain JS42).